Consider the following 339-residue polypeptide: NADPH dehydrogenase (339 aa).

21–24 contributes to the FMN binding site; that stretch reads PPMC. Residue tyrosine 26 participates in substrate binding. FMN contacts are provided by alanine 57 and glutamine 99. 162–165 provides a ligand contact to substrate; sequence HGAH. FMN is bound by residues arginine 215 and 307 to 308; that span reads GR.

The protein belongs to the NADH:flavin oxidoreductase/NADH oxidase family. NamA subfamily. As to quaternary structure, homotetramer. The cofactor is FMN.

It carries out the reaction A + NADPH + H(+) = AH2 + NADP(+). Its function is as follows. Catalyzes the reduction of the double bond of an array of alpha,beta-unsaturated aldehydes and ketones. It also reduces the nitro group of nitroester and nitroaromatic compounds. It could have a role in detoxification processes. This Clostridium acetobutylicum (strain ATCC 824 / DSM 792 / JCM 1419 / IAM 19013 / LMG 5710 / NBRC 13948 / NRRL B-527 / VKM B-1787 / 2291 / W) protein is NADPH dehydrogenase.